The following is an 88-amino-acid chain: Cell division topological specificity factor (88 aa).

Belongs to the MinE family.

Its function is as follows. Prevents the cell division inhibition by proteins MinC and MinD at internal division sites while permitting inhibition at polar sites. This ensures cell division at the proper site by restricting the formation of a division septum at the midpoint of the long axis of the cell. The chain is Cell division topological specificity factor from Carboxydothermus hydrogenoformans (strain ATCC BAA-161 / DSM 6008 / Z-2901).